Consider the following 152-residue polypeptide: Protein SprT-like (152 aa).

Residues 6–151 (LQQLVCRISL…SKCLGKLELL (146 aa)) form the SprT-like domain. Position 67 (histidine 67) interacts with Zn(2+). Residue glutamate 68 is part of the active site. Histidine 71 contributes to the Zn(2+) binding site.

The protein belongs to the SprT family. It depends on Zn(2+) as a cofactor.

Its subcellular location is the cytoplasm. The sequence is that of Protein SprT-like from Lysinibacillus sphaericus (strain C3-41).